Reading from the N-terminus, the 117-residue chain is UPF0102 protein YE3728 (117 aa).

Belongs to the UPF0102 family.

The sequence is that of UPF0102 protein YE3728 from Yersinia enterocolitica serotype O:8 / biotype 1B (strain NCTC 13174 / 8081).